The chain runs to 190 residues: Somatotropin (190 aa).

The N-terminal stretch at 1-17 (MNRVILLLSVMCVGVSS) is a signal peptide. 2 disulfides stabilise this stretch: Cys-69–Cys-163 and Cys-180–Cys-188.

Belongs to the somatotropin/prolactin family.

The protein localises to the secreted. Functionally, growth hormone plays an important role in growth control and is involved in the regulation of several anabolic processes. Implicated as an osmoregulatory substance important for seawater adaptation. The sequence is that of Somatotropin (gh) from Paralichthys olivaceus (Bastard halibut).